A 1187-amino-acid polypeptide reads, in one-letter code: Metabotropic glutamate receptor-like protein Q (1187 aa).

Residues 1-735 lie on the Extracellular side of the membrane; it reads MRLFFKFFYL…TIETSNIAKT (735 aa). N-linked (GlcNAc...) asparagine glycans are attached at residues Asn-35, Asn-44, Asn-55, Asn-177, Asn-258, Asn-275, Asn-397, Asn-402, Asn-462, Asn-526, Asn-527, Asn-557, Asn-562, and Asn-684. Residues 736 to 756 form a helical membrane-spanning segment; that stretch reads VMIITTSILVLLILLCFGITI. Topologically, residues 757–768 are cytoplasmic; it reads AYSKEKVINFGN. Residues 769–789 traverse the membrane as a helical segment; sequence IVFLILMLFSCLFLCIIIYVS. Topologically, residues 790–796 are extracellular; that stretch reads IEPTNFS. Residue Asn-794 is glycosylated (N-linked (GlcNAc...) asparagine). The chain crosses the membrane as a helical span at residues 797–817; it reads CQFSAIVFPIGIGILFTLTLL. Over 818–843 the chain is Cytoplasmic; sequence KQYKIYKLFKYSDFLKINTDNLKMVK. Residues 844–864 traverse the membrane as a helical segment; the sequence is YAGLIMVPVFLLVLIGVIVYP. The Extracellular segment spans residues 865 to 888; sequence SKPTFILDLHTKTATKYCISRKYY. A helical membrane pass occupies residues 889–909; the sequence is VFSIVIVVYEVIILLTSCFIA. The Cytoplasmic portion of the chain corresponds to 910–925; the sequence is MKSKRYHSTPGTFYES. A helical transmembrane segment spans residues 926–946; it reads LFNSILIYNYTLVFIVLIPLF. At 947-955 the chain is on the extracellular side; the sequence is YTLQNNPTT. The chain crosses the membrane as a helical span at residues 956-976; the sequence is IYLIYSIGSSILVFATLSIIF. Residues 977 to 1095 lie on the Cytoplasmic side of the membrane; sequence IPKINFLFRR…SPSSQSIDFL (119 aa). Over residues 1074–1105 the composition is skewed to polar residues; that stretch reads IYPNQIPKQTTNSPSSQSIDFLNNPTIPKNKS. The disordered stretch occupies residues 1074–1187; sequence IYPNQIPKQT…RKSMDPSLDS (114 aa). The segment covering 1114 to 1124 has biased composition (basic residues); sequence KKPKKKLKSKI. The segment covering 1125-1174 has biased composition (low complexity); it reads ISKSANSSPNINNNTINNNNNNNNNNNNNNNNNNNNNNINNNNNNNININ.

It belongs to the G-protein coupled receptor 3 family. GABA-B receptor subfamily.

Its subcellular location is the membrane. This chain is Metabotropic glutamate receptor-like protein Q (grlQ), found in Dictyostelium discoideum (Social amoeba).